A 968-amino-acid polypeptide reads, in one-letter code: MTQQTGQDADQRPSYKDTLNLLETGFGMRANAIHREPELQAFWKEKGIDLDLGRNNPGPVFTLHDGPPYANGALHMGHALNKVLKDIINKHRLMQGRKVRFVPGWDCHGLPIELKVLQAMNQEQRQALTPIKLRKKAAAYAHKQVAGQRAGFQRWGIWADWDHPYLTLQKDYEAAQIDVFGTMALKGHIYRGLKPVHWSPSSRTALAEAELEYPDGHTSPSVYVGFPVVDLPESLRSKLNAQGLDVPAASDTLSQCLQVAIWTTTPWTLPANLAVSVNDRLDYCLADDGNGQLLIVAAELCDSIASKLERPLQAKATVKGADLAGITYSHPLLERRSAIVVGGEYITTESGTGLVHTAPGHGVDDFNTGRKHGLPVLCPVDEAGTLTAEAGPFEGLNVLKDANAKIIAALEDSGSLLLQESYSHRYPYDWRTKKPTIFRATEQWFASVEGFRTEALTAIDGVQWLPASGRNRIESMVSERGDWCISRQRTWGVPIPVFYQRETGEVLLNSDSIAHVKALIAEHGADIWWEKDEVDLLPSSHKAEAHLWRKGTDTMDVWFDSGSSWASVSSQRDGLSYPADLYLEGSDQHRGWFQSSLLTSVAVNGTAPYRTVLTHGFALDEKGRKMSKSLGNVVDPMVIIEGGKNQKQEPAYGADVLRLWVSSVDYSADVPIGAGILRQLSDVYRKVRNTSRYLLGNLHDFIPSRDAISISDLPLLDRWMLQRTATVLDQISEAFERYEFFRFFQLLQNFCVADLSNFYLDIAKDRLYVSAPNDKRRRSCQTVMALIIERLAAAIAPVLCHMAEDIWQNIPYPTGTESVFLSGWPSVPEEWRDDSLRDPMQELRELRAAVNKVLEECRSKRKLGSSLEAAVRLEARTPALQDALQWLQSKGDQEVDGLRDWLLVSQLQIGGEPWAELLASDDNELAVIEVALSRGQKCERCWHYEADIGQYSDHPGLCGRCVSVLERR.

Residues 68 to 78 carry the 'HIGH' region motif; that stretch reads PYANGALHMGH. Residue E584 participates in L-isoleucyl-5'-AMP binding. Positions 625–629 match the 'KMSKS' region motif; sequence KMSKS. Residue K628 participates in ATP binding. Positions 938, 941, 958, and 961 each coordinate Zn(2+).

It belongs to the class-I aminoacyl-tRNA synthetase family. IleS type 1 subfamily. In terms of assembly, monomer. Requires Zn(2+) as cofactor.

Its subcellular location is the cytoplasm. The enzyme catalyses tRNA(Ile) + L-isoleucine + ATP = L-isoleucyl-tRNA(Ile) + AMP + diphosphate. In terms of biological role, catalyzes the attachment of isoleucine to tRNA(Ile). As IleRS can inadvertently accommodate and process structurally similar amino acids such as valine, to avoid such errors it has two additional distinct tRNA(Ile)-dependent editing activities. One activity is designated as 'pretransfer' editing and involves the hydrolysis of activated Val-AMP. The other activity is designated 'posttransfer' editing and involves deacylation of mischarged Val-tRNA(Ile). In Synechococcus sp. (strain CC9311), this protein is Isoleucine--tRNA ligase.